Here is an 803-residue protein sequence, read N- to C-terminus: Ras GTPase-activating protein 4B (803 aa).

C2 domains lie at 1 to 105 (MAKR…SGWA) and 116 to 232 (VQGE…EGWF). Residues Asp21, Asp27, Asp74, Asp76, Ser79, Asp82, Asp149, Asp155, Asp202, Asp204, Ser207, and Asp210 each coordinate Ca(2+). The Ras-GAP domain maps to 318 to 546 (GLAKDFLDLL…AQLKDFITKL (229 aa)). One can recognise a PH domain in the interval 566–673 (PPVKEGPLFI…WLSALRKVSI (108 aa)). The Btk-type zinc finger occupies 675–711 (NTGLLGSYHPGVFRGDKWSCCHQKEKTGQGCDKTRSR). Zn(2+) is bound by residues His683, Cys694, Cys695, and Cys705. A disordered region spans residues 781-803 (EAHSSSPAGSPPSEPNCLLELQT).

It depends on Ca(2+) as a cofactor.

It is found in the cytoplasm. It localises to the cytosol. Its subcellular location is the cell membrane. Ca(2+)-dependent Ras GTPase-activating protein, that may play a role in the Ras-MAPK pathway. This Homo sapiens (Human) protein is Ras GTPase-activating protein 4B (RASA4B).